A 404-amino-acid chain; its full sequence is MNKQIQTEADELGFFGEYGGQYVPETLMPAIIELKKAYKEAKADPEFQRELEYYLSEYVGRATPLTYAASYTESLGGAKIYLKREDLNHTGAHKINNALGQALLAKRMGKKKLVAETGAGQHGVASATVAALFDMELVVFMGSEDIKRQQLNVFRMELLGAKVVAVEDGQGTLSDAVNKALQYWVSHVDDTHYLLGSALGPDPFPTIVRDFQSVIGKEIKSQILKKEGRLPDAIVACIGGGSNAIGTFYPFIKDDVALYGVEAAGQGDDTDKHALAIGKGSPGVLHGTKMYLIQDEDGQVQLAHSISAGLDYPGIGPEHSYYHDIGRVTFENASDTQAMNALINFTKHEGIIPAIESAHALSYVERLAPTMSKEDIIVVTISGRGDKDMETIRQYMVERGLAND.

N6-(pyridoxal phosphate)lysine is present on lysine 94.

It belongs to the TrpB family. Tetramer of two alpha and two beta chains. Requires pyridoxal 5'-phosphate as cofactor.

It carries out the reaction (1S,2R)-1-C-(indol-3-yl)glycerol 3-phosphate + L-serine = D-glyceraldehyde 3-phosphate + L-tryptophan + H2O. It functions in the pathway amino-acid biosynthesis; L-tryptophan biosynthesis; L-tryptophan from chorismate: step 5/5. In terms of biological role, the beta subunit is responsible for the synthesis of L-tryptophan from indole and L-serine. The sequence is that of Tryptophan synthase beta chain from Staphylococcus aureus (strain USA300).